The primary structure comprises 142 residues: ATP synthase epsilon chain (142 aa).

It belongs to the ATPase epsilon chain family. F-type ATPases have 2 components, CF(1) - the catalytic core - and CF(0) - the membrane proton channel. CF(1) has five subunits: alpha(3), beta(3), gamma(1), delta(1), epsilon(1). CF(0) has three main subunits: a, b and c.

It localises to the cell inner membrane. Produces ATP from ADP in the presence of a proton gradient across the membrane. The chain is ATP synthase epsilon chain from Shewanella baltica (strain OS185).